Consider the following 212-residue polypeptide: FMN-dependent NADH:quinone oxidoreductase (212 aa).

FMN is bound by residues Ser9, 15 to 17, and 138 to 141; these read SVS and TRGG.

It belongs to the azoreductase type 1 family. Homodimer. It depends on FMN as a cofactor.

The enzyme catalyses 2 a quinone + NADH + H(+) = 2 a 1,4-benzosemiquinone + NAD(+). It carries out the reaction N,N-dimethyl-1,4-phenylenediamine + anthranilate + 2 NAD(+) = 2-(4-dimethylaminophenyl)diazenylbenzoate + 2 NADH + 2 H(+). In terms of biological role, quinone reductase that provides resistance to thiol-specific stress caused by electrophilic quinones. Also exhibits azoreductase activity. Catalyzes the reductive cleavage of the azo bond in aromatic azo compounds to the corresponding amines. In Delftia acidovorans (strain DSM 14801 / SPH-1), this protein is FMN-dependent NADH:quinone oxidoreductase.